The sequence spans 592 residues: Cell division protein FtsZ (592 aa).

Residues 24-28, 111-113, Glu142, Arg146, and Asp190 each bind GTP; these read GGGGN and GTG. The segment at 333–362 is disordered; that stretch reads KFQKSVSSVRKNDSGINQTASHPQSSQLRS.

Belongs to the FtsZ family. Homodimer. Polymerizes to form a dynamic ring structure in a strictly GTP-dependent manner. Interacts directly with several other division proteins.

Its subcellular location is the cytoplasm. Its function is as follows. Essential cell division protein that forms a contractile ring structure (Z ring) at the future cell division site. The regulation of the ring assembly controls the timing and the location of cell division. One of the functions of the FtsZ ring is to recruit other cell division proteins to the septum to produce a new cell wall between the dividing cells. Binds GTP and shows GTPase activity. The polypeptide is Cell division protein FtsZ (Bartonella bacilliformis).